Reading from the N-terminus, the 331-residue chain is Cytosolic sulfotransferase 8 (331 aa).

A compositionally biased stretch (basic and acidic residues) spans 1 to 11; the sequence is MGEKDIPRNLK. Residues 1–31 are disordered; the sequence is MGEKDIPRNLKEEEEEEEENQSEETKSLISS. The span at 12-22 shows a compositional bias: acidic residues; the sequence is EEEEEEEENQS. 80-85 is a 3'-phosphoadenylyl sulfate binding site; that stretch reads KSGTTW. Histidine 145 serves as the catalytic Proton acceptor. 3'-phosphoadenylyl sulfate contacts are provided by residues arginine 167, serine 175, tyrosine 231, and 297 to 299; that span reads RKG.

Belongs to the sulfotransferase 1 family. In terms of tissue distribution, expressed in seedlings and roots.

It localises to the cytoplasm. Sulfotransferase that utilizes 3'-phospho-5'-adenylyl sulfate (PAPS) as sulfonate donor. No activity with brassinosteroids. This chain is Cytosolic sulfotransferase 8 (SOT8), found in Arabidopsis thaliana (Mouse-ear cress).